The primary structure comprises 402 residues: MMAHCAGCERPILDRFLLNVLDRAWHVKCVQCCECKCNLTEKCFSREGKLYCKTDFFRRFGTKCAGCSLGISPSDLVRKARNKVFHLNCFTCMVCNKQLSTGEELYIIDENKFVCKEDYISASSLKESSLNSVSSCTDRSLSPDIQDPIQDESKETDHSTSSDKETANNENEEQNSGTKRRGPRTTIKAKQLETLKAAFIATPKPTRHIREQLAQETGLNMRVIQVWFQNRRSKERRMKQLSALGARRHAFFRSPRRMRPLGGRLDESEILSSGPYSYYGDYQGDYYGSGNYDFFPHGPPSSQTQSPADSSYLQNSGPGSTPLGPLESQLSGHHPSENQRYVDMISHPDTPSPEPGMTGPLHPISGEVFTGGPSPPFSMSNNSGFSGPLPHQNLDINEATVW.

2 consecutive LIM zinc-binding domains span residues alanine 3–glycine 61 and threonine 62–leucine 125. 3 disordered regions span residues valine 133–isoleucine 187, asparagine 291–proline 335, and serine 365–glutamine 392. Residues aspartate 151–alanine 167 show a composition bias toward basic and acidic residues. Residues arginine 180–lysine 239 constitute a DNA-binding region (homeobox). A compositionally biased stretch (polar residues) spans proline 300 to glycine 319.

In terms of assembly, interacts with ldb1 and with the N-terminus of rnf12.

The protein resides in the nucleus. Its function is as follows. Probably involved in the patterning of the nervous system, in particular in the early specification of the diencephalon. In Xenopus laevis (African clawed frog), this protein is LIM/homeobox protein Lhx5 (lhx5).